Reading from the N-terminus, the 625-residue chain is TRAF3-interacting protein 1 (625 aa).

The abolishes microtubules binding when missing stretch occupies residues 1–322; it reads MNAAVVRRTQ…RKLSDGSFKD (322 aa). The disordered stretch occupies residues 130–439; it reads AGDKGDSRGR…DSQNSDNEDD (310 aa). Residues 141–152 are compositionally biased toward polar residues; sequence QRTSKAQEPNNK. The segment covering 153–327 has biased composition (basic and acidic residues); that stretch reads SGKEEESRIH…GSFKDVKAEM (175 aa). The segment at 229–625 is DISC1-interaction domain; it reads RAKDRDRNNR…VHSINLSSRR (397 aa). Phosphoserine is present on residues serine 316 and serine 409. The segment covering 420-434 has biased composition (polar residues); that stretch reads SGKTVSSVIIDSQNS. Residues 472-600 adopt a coiled-coil conformation; that stretch reads GLVKKILETK…IRDQQDKICA (129 aa).

This sequence belongs to the TRAF3IP1 family. In terms of assembly, interacts with IL13RA1. Binds to microtubules, TRAF3 and DISC1. Component of the IFT complex B, at least composed of IFT20, IFT22, IFT25, IFT27, IFT46, IFT52, TRAF3IP1/IFT54, IFT57, IFT74, IFT80, IFT81, and IFT88. Interacts with IFT88. Interacts with MAP4.

The protein localises to the cytoplasm. The protein resides in the cytoskeleton. It is found in the cell projection. It localises to the cilium. Its subcellular location is the cilium axoneme. The protein localises to the cilium basal body. Its function is as follows. Plays an inhibitory role on IL13 signaling by binding to IL13RA1. Involved in suppression of IL13-induced STAT6 phosphorylation, transcriptional activity and DNA-binding. Recruits TRAF3 and DISC1 to the microtubules. Involved in epithelial morphogenesis and in the regulation of microtubule cytoskeleton organization. Is a negative regulator of microtubule stability, acting through the control of MAP4 levels. Involved in ciliogenesis. This is TRAF3-interacting protein 1 (Traf3ip1) from Mus musculus (Mouse).